Reading from the N-terminus, the 281-residue chain is Putative phosphoenolpyruvate synthase regulatory protein (281 aa).

Glycine 161 to threonine 168 lines the ADP pocket.

The protein belongs to the pyruvate, phosphate/water dikinase regulatory protein family. PSRP subfamily.

The enzyme catalyses [pyruvate, water dikinase] + ADP = [pyruvate, water dikinase]-phosphate + AMP + H(+). It carries out the reaction [pyruvate, water dikinase]-phosphate + phosphate + H(+) = [pyruvate, water dikinase] + diphosphate. In terms of biological role, bifunctional serine/threonine kinase and phosphorylase involved in the regulation of the phosphoenolpyruvate synthase (PEPS) by catalyzing its phosphorylation/dephosphorylation. The chain is Putative phosphoenolpyruvate synthase regulatory protein from Herminiimonas arsenicoxydans.